The chain runs to 198 residues: MHSEAEESKEVATDVFNSKNLAVQAQKKILGKMVSKSIATTLIDDTSSEVLDELYRVTREYTQNKKEAEKIIKNLIKTVIKLAILYRNNQFNQDELALMEKFKKKVHQLAMTVVSFHQVDYTFDRNVLSRLLNECREMLHQIIQRHLTAKSHGRVNNVFDHFSDCEFLAALYNPFGNFKPHLQKLCDGINKMLDEENI.

Residues 49 to 83 (EVLDELYRVTREYTQNKKEAEKIIKNLIKTVIKLA) adopt a coiled-coil conformation.

It belongs to the TNFAIP8 family. In terms of tissue distribution, expressed at high levels in the spleen, lymph node, thymus, thyroid, bone marrow and placenta. Expressed at high levels both in various tumor tissues, unstimulated and cytokine-activated cultured cells. Expressed at low levels in the spinal cord, ovary, lung, adrenal glands, heart, brain, testis and skeletal muscle.

The protein resides in the cytoplasm. Its function is as follows. Acts as a negative mediator of apoptosis and may play a role in tumor progression. Suppresses the TNF-mediated apoptosis by inhibiting caspase-8 activity but not the processing of procaspase-8, subsequently resulting in inhibition of BID cleavage and caspase-3 activation. The protein is Tumor necrosis factor alpha-induced protein 8 (TNFAIP8) of Homo sapiens (Human).